Consider the following 856-residue polypeptide: Leucine--tRNA ligase (856 aa).

Residues 53–63 (PYPSGNLHMGH) carry the 'HIGH' region motif. The 'KMSKS' region motif lies at 622–626 (KMSKS). Lys-625 contacts ATP.

It belongs to the class-I aminoacyl-tRNA synthetase family.

It localises to the cytoplasm. The enzyme catalyses tRNA(Leu) + L-leucine + ATP = L-leucyl-tRNA(Leu) + AMP + diphosphate. This is Leucine--tRNA ligase from Prochlorococcus marinus (strain AS9601).